The sequence spans 175 residues: ATP synthase subunit b (175 aa).

The helical transmembrane segment at 14–34 (LSPNPGLIFWTTVSFVIVLLI) threads the bilayer.

Belongs to the ATPase B chain family. As to quaternary structure, F-type ATPases have 2 components, F(1) - the catalytic core - and F(0) - the membrane proton channel. F(1) has five subunits: alpha(3), beta(3), gamma(1), delta(1), epsilon(1). F(0) has four main subunits: a(1), b(2) and c(10-14). The alpha and beta chains form an alternating ring which encloses part of the gamma chain. F(1) is attached to F(0) by a central stalk formed by the gamma and epsilon chains, while a peripheral stalk is formed by the delta and b chains.

The protein localises to the cell inner membrane. F(1)F(0) ATP synthase produces ATP from ADP in the presence of a proton or sodium gradient. F-type ATPases consist of two structural domains, F(1) containing the extramembraneous catalytic core and F(0) containing the membrane proton channel, linked together by a central stalk and a peripheral stalk. During catalysis, ATP synthesis in the catalytic domain of F(1) is coupled via a rotary mechanism of the central stalk subunits to proton translocation. Functionally, component of the F(0) channel, it forms part of the peripheral stalk, linking F(1) to F(0). In Chlorobium phaeobacteroides (strain DSM 266 / SMG 266 / 2430), this protein is ATP synthase subunit b.